We begin with the raw amino-acid sequence, 961 residues long: Cytochrome b5-like reductase apf12 (961 aa).

Ala-298 is an FAD binding site. The FAD-binding FR-type domain occupies 429–548 (ARPQVDAFAW…IKPAPHFRIA (120 aa)). NADP(+) contacts are provided by residues 453–456 (SRIQ), 499–500 (SK), and Gly-753. In terms of domain architecture, Cytochrome b5 heme-binding spans 716-793 (LNQITKLELA…LNEMVIGRLD (78 aa)). 753-755 (GGE) provides a ligand contact to FAD.

Belongs to the flavoprotein pyridine nucleotide cytochrome reductase family. It depends on FAD as a cofactor.

It functions in the pathway secondary metabolite biosynthesis. In terms of biological role, cytochrome b5-like reductase; part of the gene cluster that mediates the biosynthesis of the cyclic tetrapeptide apicidin F (APF). The non-ribosomal peptide synthetase apf1 incorporates four different amino acids to produce apicidin F: L-phenylalanine, D-pipecolic acid (D-pip), N-methoxy-L-tryptophan and L-2-aminooctanedioic acid. L-Phenylalanine is the only proteinogenic amino acid directly used by apf1. The 3 other apf1 substrates are non-proteinogenic and have to be modified by other enzymes of the cluster. Lysine is converted to delta-1-pyrroline-5-carboxylate (P5C) which is reduced to L-pipecolic acid (L-pip) by apf3. L-pip is epimerized to D-pip, probably by apf1 activity, prior to incorporation. L-Tryptophan is N-oxidyzed by one of the cytochrome P450 monooxygenases (apf7 or apf8), and further methylated at the hydroxy group by the O-methyltransferase apf6 to yield N-methoxy-L-tryptophan. The synthesis of the fourth apf1 substrate is more complex. The fatty acid synthase apf5 is involved in the synthesis of the octanoic acid backbone of L-2-aminooctanedioic acid by fixing one acetyl-CoA unit and three malonyl-CoA units. Then one of the cytochrome P450 monooxygenases (apf7 or apf8) may oxidize this backbone to 2-oxooctanoic acid. The aminotransferase apf4 is predicted to catalyze the exchange of the keto group with an amino group. The next step would be the oxidation of 2-aminooctanoic acid by one of the cytochrome P450 monooxygenases (apf7 or apf8). The last step is the oxidation of 2-amino-8-hydroxyoctanoic acid to 2-aminooctanedioic acid is catalyzed by the FAD-dependent monooxygenase apf9. This chain is Cytochrome b5-like reductase apf12, found in Gibberella fujikuroi (strain CBS 195.34 / IMI 58289 / NRRL A-6831) (Bakanae and foot rot disease fungus).